The chain runs to 198 residues: uncharacterized protein (198 aa).

The interval glutamate 51–histidine 74 is disordered.

This is an uncharacterized protein from Homo sapiens (Human).